Reading from the N-terminus, the 201-residue chain is Imidazole glycerol phosphate synthase subunit HisH (201 aa).

The region spanning 2 to 201 (KVVILDTGCA…ARLLKNFLEM (200 aa)) is the Glutamine amidotransferase type-1 domain. The active-site Nucleophile is C77. Catalysis depends on residues H183 and E185.

Heterodimer of HisH and HisF.

It is found in the cytoplasm. The catalysed reaction is 5-[(5-phospho-1-deoxy-D-ribulos-1-ylimino)methylamino]-1-(5-phospho-beta-D-ribosyl)imidazole-4-carboxamide + L-glutamine = D-erythro-1-(imidazol-4-yl)glycerol 3-phosphate + 5-amino-1-(5-phospho-beta-D-ribosyl)imidazole-4-carboxamide + L-glutamate + H(+). It catalyses the reaction L-glutamine + H2O = L-glutamate + NH4(+). The protein operates within amino-acid biosynthesis; L-histidine biosynthesis; L-histidine from 5-phospho-alpha-D-ribose 1-diphosphate: step 5/9. Its function is as follows. IGPS catalyzes the conversion of PRFAR and glutamine to IGP, AICAR and glutamate. The HisH subunit catalyzes the hydrolysis of glutamine to glutamate and ammonia as part of the synthesis of IGP and AICAR. The resulting ammonia molecule is channeled to the active site of HisF. The sequence is that of Imidazole glycerol phosphate synthase subunit HisH from Photorhabdus laumondii subsp. laumondii (strain DSM 15139 / CIP 105565 / TT01) (Photorhabdus luminescens subsp. laumondii).